Consider the following 80-residue polypeptide: MKADIHPDYRQVVFVDSTTGAKFLSGSTAKAQGEVEYEGQTYPMVRVEVTSDSHPFYTGKQKINQADGAVDKFNKKYGLN.

Belongs to the bacterial ribosomal protein bL31 family. Type B subfamily. Part of the 50S ribosomal subunit.

The polypeptide is Large ribosomal subunit protein bL31B (Oenococcus oeni (strain ATCC BAA-331 / PSU-1)).